The following is a 575-amino-acid chain: MQNTQTPSPMPFGKYTPFQDQIRVELPDRTWPTRTITKAPRWCAVDLRDGNQALIDPMNSERKLRMFTLLVQMGYKDIEVGFPSASQTDFDFVRTLIENDLIPDDVRIQVLTQAREHLIERTYESLRGAKQAIVHLYNSTSVLQRRVVFGMDEDGIVDLALQGARLCRKFEETIPGTTVYYEYSPESYTGTELEFAARICNAVVAVFEPTPERQVIVNLPATVEMATPNVYADSIEWMSRHLDQRENVIISLHPHNDRGTGVAAAELGYLAGADRIEGCLFGNGERTGNVDLVTLGMNLFSQGIDPQIDFSDIDHIRRTVEHCNQLPVGERVPYGGDLVFTAFSGSHQDAIKKGLEAMERDAAAAGKTVDEIPWAVPYLPIDPRDVGRSYEAVIRVNSQSGKGGVAYLLKAEHQLDLPRRLQIEFSRVIQERTDAQGGEVSAAQIFDVFSDEYLPSGSGTPEWGRFALRGTRSVSVVDGADTLEVDLHDDGAENTVRGTGNGPIAAFCAALGSRGVDVRVLDYAEHALSAGGDAQAAAYVECAVAGRVLWGVGIDHNITTASLKAIVSAVNRALR.

A Pyruvate carboxyltransferase domain is found at 40-314 (PRWCAVDLRD…DPQIDFSDID (275 aa)). Mg(2+) is bound by residues aspartate 49, histidine 253, histidine 255, and asparagine 289. The tract at residues 456-575 (SGSGTPEWGR…IVSAVNRALR (120 aa)) is regulatory domain.

This sequence belongs to the alpha-IPM synthase/homocitrate synthase family. LeuA type 2 subfamily. Homodimer. Mg(2+) is required as a cofactor.

It localises to the cytoplasm. It catalyses the reaction 3-methyl-2-oxobutanoate + acetyl-CoA + H2O = (2S)-2-isopropylmalate + CoA + H(+). It participates in amino-acid biosynthesis; L-leucine biosynthesis; L-leucine from 3-methyl-2-oxobutanoate: step 1/4. In terms of biological role, catalyzes the condensation of the acetyl group of acetyl-CoA with 3-methyl-2-oxobutanoate (2-ketoisovalerate) to form 3-carboxy-3-hydroxy-4-methylpentanoate (2-isopropylmalate). In Kineococcus radiotolerans (strain ATCC BAA-149 / DSM 14245 / SRS30216), this protein is 2-isopropylmalate synthase.